The chain runs to 844 residues: Beta-mannosidase B (844 aa).

Residue glutamate 432 is the Proton donor of the active site.

Belongs to the glycosyl hydrolase 2 family. Beta-mannosidase B subfamily.

It catalyses the reaction Hydrolysis of terminal, non-reducing beta-D-mannose residues in beta-D-mannosides.. Its pathway is glycan metabolism; N-glycan degradation. Its function is as follows. Exoglycosidase that cleaves the single beta-linked mannose residue from the non-reducing end of beta-mannosidic oligosaccharides of various complexity and length. Prefers mannobiose over mannotriose and has no activity against polymeric mannan. Is also severely restricted by galactosyl substitutions at the +1 subsite. This Aspergillus oryzae (strain ATCC 42149 / RIB 40) (Yellow koji mold) protein is Beta-mannosidase B (mndB).